Reading from the N-terminus, the 443-residue chain is L-seryl-tRNA(Sec) selenium transferase (443 aa).

The residue at position 285 (K285) is an N6-(pyridoxal phosphate)lysine.

This sequence belongs to the SelA family. The cofactor is pyridoxal 5'-phosphate.

It is found in the cytoplasm. The catalysed reaction is L-seryl-tRNA(Sec) + selenophosphate + H(+) = L-selenocysteinyl-tRNA(Sec) + phosphate. The protein operates within aminoacyl-tRNA biosynthesis; selenocysteinyl-tRNA(Sec) biosynthesis; selenocysteinyl-tRNA(Sec) from L-seryl-tRNA(Sec) (bacterial route): step 1/1. Functionally, converts seryl-tRNA(Sec) to selenocysteinyl-tRNA(Sec) required for selenoprotein biosynthesis. In Campylobacter lari (strain RM2100 / D67 / ATCC BAA-1060), this protein is L-seryl-tRNA(Sec) selenium transferase.